We begin with the raw amino-acid sequence, 190 residues long: MSDNSYKPYALGAARAGVDGGFKPGNDDPFYSGLSDQLADKGYFTAAADDLISWARTGSLMWMTFGLACCAVEMMHAGNPRYDLERFGMAPRGSPRQSDVMIVAGTLTNKMAPALRKVYDQMPEPRYVISMGSCANGGGYYHYSYSVVRGCDRIVPVDIYIPGCPPTAEALVYGFLQLQKKIRREGSIER.

Cysteine 69, cysteine 70, cysteine 134, and cysteine 164 together coordinate [4Fe-4S] cluster.

This sequence belongs to the complex I 20 kDa subunit family. In terms of assembly, NDH-1 is composed of 14 different subunits. Subunits NuoB, C, D, E, F, and G constitute the peripheral sector of the complex. [4Fe-4S] cluster is required as a cofactor.

Its subcellular location is the cell inner membrane. It carries out the reaction a quinone + NADH + 5 H(+)(in) = a quinol + NAD(+) + 4 H(+)(out). Functionally, NDH-1 shuttles electrons from NADH, via FMN and iron-sulfur (Fe-S) centers, to quinones in the respiratory chain. Couples the redox reaction to proton translocation (for every two electrons transferred, four hydrogen ions are translocated across the cytoplasmic membrane), and thus conserves the redox energy in a proton gradient. The protein is NADH-quinone oxidoreductase subunit B of Hyphomonas neptunium (strain ATCC 15444).